Consider the following 155-residue polypeptide: Ribosomal RNA large subunit methyltransferase H (155 aa).

S-adenosyl-L-methionine-binding positions include G104 and 123–128; that span reads LSAMTF.

This sequence belongs to the RNA methyltransferase RlmH family. As to quaternary structure, homodimer.

The protein resides in the cytoplasm. The catalysed reaction is pseudouridine(1915) in 23S rRNA + S-adenosyl-L-methionine = N(3)-methylpseudouridine(1915) in 23S rRNA + S-adenosyl-L-homocysteine + H(+). Its function is as follows. Specifically methylates the pseudouridine at position 1915 (m3Psi1915) in 23S rRNA. This Oleidesulfovibrio alaskensis (strain ATCC BAA-1058 / DSM 17464 / G20) (Desulfovibrio alaskensis) protein is Ribosomal RNA large subunit methyltransferase H.